Reading from the N-terminus, the 835-residue chain is Translation initiation factor IF-2 (835 aa).

A disordered region spans residues 1–240 (MSDSDGKKTL…RKQERARQKA (240 aa)). Residues 50 to 59 (AGKGGAGGVA) are compositionally biased toward gly residues. A compositionally biased stretch (basic and acidic residues) spans 86 to 152 (KAREAEEAAQ…AEAAKKRAAA (67 aa)). The span at 153–169 (DKAAAAAPKSDAGVAPA) shows a compositional bias: low complexity. Positions 184–205 (RKAEREREERGRGAKGRNDGGR) are enriched in basic and acidic residues. Residues 332–500 (PRPPVITIMG…AIALQAEILE (169 aa)) form the tr-type G domain. The segment at 341-348 (GHVDHGKT) is G1. Residue 341-348 (GHVDHGKT) coordinates GTP. The tract at residues 366–370 (GITQH) is G2. Residues 388–391 (DTPG) form a G3 region. GTP contacts are provided by residues 388–392 (DTPGH) and 442–445 (NKID). The segment at 442–445 (NKID) is G4. The interval 478-480 (SAH) is G5.

Belongs to the TRAFAC class translation factor GTPase superfamily. Classic translation factor GTPase family. IF-2 subfamily.

It is found in the cytoplasm. Its function is as follows. One of the essential components for the initiation of protein synthesis. Protects formylmethionyl-tRNA from spontaneous hydrolysis and promotes its binding to the 30S ribosomal subunits. Also involved in the hydrolysis of GTP during the formation of the 70S ribosomal complex. This chain is Translation initiation factor IF-2, found in Ruegeria sp. (strain TM1040) (Silicibacter sp.).